Here is a 41-residue protein sequence, read N- to C-terminus: Large ribosomal subunit protein bL36 (41 aa).

The protein belongs to the bacterial ribosomal protein bL36 family.

This Gluconobacter oxydans (strain 621H) (Gluconobacter suboxydans) protein is Large ribosomal subunit protein bL36.